We begin with the raw amino-acid sequence, 118 residues long: Large ribosomal subunit protein bL20 (118 aa).

It belongs to the bacterial ribosomal protein bL20 family.

Binds directly to 23S ribosomal RNA and is necessary for the in vitro assembly process of the 50S ribosomal subunit. It is not involved in the protein synthesizing functions of that subunit. In Syntrophotalea carbinolica (strain DSM 2380 / NBRC 103641 / GraBd1) (Pelobacter carbinolicus), this protein is Large ribosomal subunit protein bL20.